Reading from the N-terminus, the 336-residue chain is F420-dependent glucose-6-phosphate dehydrogenase (336 aa).

Residue Asp-39 coordinates coenzyme F420-(gamma-Glu)n. His-40 functions as the Proton donor in the catalytic mechanism. Residues Thr-76 and 107–108 (SG) each bind coenzyme F420-(gamma-Glu)n. The Proton acceptor role is filled by Glu-109. Coenzyme F420-(gamma-Glu)n-binding positions include Asn-112, 177–178 (GG), and 180–181 (VV). Residues Thr-195, Lys-198, Lys-259, and Arg-283 each contribute to the substrate site.

Belongs to the F420-dependent glucose-6-phosphate dehydrogenase family. Homodimer.

The enzyme catalyses oxidized coenzyme F420-(gamma-L-Glu)(n) + D-glucose 6-phosphate + H(+) = 6-phospho-D-glucono-1,5-lactone + reduced coenzyme F420-(gamma-L-Glu)(n). Its function is as follows. Catalyzes the coenzyme F420-dependent oxidation of glucose 6-phosphate (G6P) to 6-phosphogluconolactone. This chain is F420-dependent glucose-6-phosphate dehydrogenase, found in Tsukamurella paurometabola (strain ATCC 8368 / DSM 20162 / CCUG 35730 / CIP 100753 / JCM 10117 / KCTC 9821 / NBRC 16120 / NCIMB 702349 / NCTC 13040) (Corynebacterium paurometabolum).